The following is a 90-amino-acid chain: Probable Fe(2+)-trafficking protein (90 aa).

It belongs to the Fe(2+)-trafficking protein family.

Its function is as follows. Could be a mediator in iron transactions between iron acquisition and iron-requiring processes, such as synthesis and/or repair of Fe-S clusters in biosynthetic enzymes. The polypeptide is Probable Fe(2+)-trafficking protein (Hydrogenovibrio crunogenus (strain DSM 25203 / XCL-2) (Thiomicrospira crunogena)).